The sequence spans 382 residues: Histone acetyltransferase type B subunit 2 (382 aa).

WD repeat units follow at residues 98-138 (ENNA…RYSH), 141-181 (PHTK…TTFK), 184-224 (IQKD…VVSQ), 228-268 (ESSN…ENSG), and 275-315 (GHSE…EEQQ). Residues 317 to 321 (EDAED) form an interaction with the histone H4 N-terminus region. One copy of the WD 6 repeat lies at 332-372 (GHTAGVSDLSWCPFKDWMIGSVADDNIVHLWEISKKLITNE).

Belongs to the WD repeat RBAP46/RBAP48/MSI1 family. Component of the HAT-B complex composed of at least HAT1 and HAT2. The HAT-B complex binds to histone H4 tail.

The protein localises to the cytoplasm. The protein resides in the nucleus. Functionally, regulatory subunit of the histone acetylase B (HAT-B) complex. The complex acetylates 'Lys-14' of histone H4 which is required for telomeric silencing. The chain is Histone acetyltransferase type B subunit 2 (HAT2) from Candida albicans (strain SC5314 / ATCC MYA-2876) (Yeast).